A 167-amino-acid chain; its full sequence is Crossover junction endodeoxyribonuclease RuvC (167 aa).

Catalysis depends on residues Asp8, Glu68, and Asp140. Positions 8, 68, and 140 each coordinate Mg(2+).

This sequence belongs to the RuvC family. In terms of assembly, homodimer which binds Holliday junction (HJ) DNA. The HJ becomes 2-fold symmetrical on binding to RuvC with unstacked arms; it has a different conformation from HJ DNA in complex with RuvA. In the full resolvosome a probable DNA-RuvA(4)-RuvB(12)-RuvC(2) complex forms which resolves the HJ. Requires Mg(2+) as cofactor.

The protein resides in the cytoplasm. It catalyses the reaction Endonucleolytic cleavage at a junction such as a reciprocal single-stranded crossover between two homologous DNA duplexes (Holliday junction).. Its function is as follows. The RuvA-RuvB-RuvC complex processes Holliday junction (HJ) DNA during genetic recombination and DNA repair. Endonuclease that resolves HJ intermediates. Cleaves cruciform DNA by making single-stranded nicks across the HJ at symmetrical positions within the homologous arms, yielding a 5'-phosphate and a 3'-hydroxyl group; requires a central core of homology in the junction. The consensus cleavage sequence is 5'-(A/T)TT(C/G)-3'. Cleavage occurs on the 3'-side of the TT dinucleotide at the point of strand exchange. HJ branch migration catalyzed by RuvA-RuvB allows RuvC to scan DNA until it finds its consensus sequence, where it cleaves and resolves the cruciform DNA. In Sinorhizobium medicae (strain WSM419) (Ensifer medicae), this protein is Crossover junction endodeoxyribonuclease RuvC.